Consider the following 413-residue polypeptide: Gamma-glutamyl phosphate reductase (413 aa).

The protein belongs to the gamma-glutamyl phosphate reductase family.

Its subcellular location is the cytoplasm. It catalyses the reaction L-glutamate 5-semialdehyde + phosphate + NADP(+) = L-glutamyl 5-phosphate + NADPH + H(+). Its pathway is amino-acid biosynthesis; L-proline biosynthesis; L-glutamate 5-semialdehyde from L-glutamate: step 2/2. Catalyzes the NADPH-dependent reduction of L-glutamate 5-phosphate into L-glutamate 5-semialdehyde and phosphate. The product spontaneously undergoes cyclization to form 1-pyrroline-5-carboxylate. This is Gamma-glutamyl phosphate reductase from Alkaliphilus oremlandii (strain OhILAs) (Clostridium oremlandii (strain OhILAs)).